The chain runs to 643 residues: Long-chain fatty acid transport protein 4 (643 aa).

2 helical membrane-spanning segments follow: residues 20 to 42 and 139 to 156; these read LPWT…WRFI and FVGL…AALI. An AMP-binding site is contributed by 243-254; sequence YIYTSGTTGLPK.

Belongs to the ATP-dependent AMP-binding enzyme family.

Its subcellular location is the endoplasmic reticulum membrane. It carries out the reaction a fatty acid(in) = a fatty acid(out). The catalysed reaction is (9Z,12Z)-octadecadienoate(out) = (9Z,12Z)-octadecadienoate(in). The enzyme catalyses (9Z)-octadecenoate(out) = (9Z)-octadecenoate(in). It catalyses the reaction hexadecanoate(out) = hexadecanoate(in). It carries out the reaction a long-chain fatty acid + ATP + CoA = a long-chain fatty acyl-CoA + AMP + diphosphate. The catalysed reaction is (5Z,8Z,11Z,14Z)-eicosatetraenoate + ATP + CoA = (5Z,8Z,11Z,14Z)-eicosatetraenoyl-CoA + AMP + diphosphate. The enzyme catalyses (9Z)-octadecenoate + ATP + CoA = (9Z)-octadecenoyl-CoA + AMP + diphosphate. It catalyses the reaction hexadecanoate + ATP + CoA = hexadecanoyl-CoA + AMP + diphosphate. It carries out the reaction (E)-hexadec-2-enoate + ATP + CoA = (2E)-hexadecenoyl-CoA + AMP + diphosphate. The catalysed reaction is a very long-chain fatty acid + ATP + CoA = a very long-chain fatty acyl-CoA + AMP + diphosphate. The enzyme catalyses tetracosanoate + ATP + CoA = tetracosanoyl-CoA + AMP + diphosphate. Functionally, mediates the import of long-chain fatty acids (LCFA) into the cell by facilitating their transport across cell membranes. Appears to be the principal fatty acid transporter in small intestinal enterocytes. Also functions as an acyl-CoA ligase catalyzing the ATP-dependent formation of fatty acyl-CoA using LCFA and very-long-chain fatty acids (VLCFA) as substrates, which prevents fatty acid efflux from cells and might drive more fatty acid uptake. Plays a role in the formation of the epidermal barrier. Required for fat absorption in early embryogenesis. Probably involved in fatty acid transport across the blood barrier. Indirectly inhibits RPE65 via substrate competition and via production of VLCFA derivatives like lignoceroyl-CoA. Prevents light-induced degeneration of rods and cones. This chain is Long-chain fatty acid transport protein 4 (SLC27A4), found in Pongo abelii (Sumatran orangutan).